We begin with the raw amino-acid sequence, 175 residues long: Inorganic pyrophosphatase (175 aa).

Substrate contacts are provided by lysine 30, arginine 44, and tyrosine 56. Mg(2+) contacts are provided by aspartate 66, aspartate 71, and aspartate 103. Tyrosine 142 serves as a coordination point for substrate.

It belongs to the PPase family. In terms of assembly, homohexamer. The cofactor is Mg(2+).

The protein localises to the cytoplasm. The enzyme catalyses diphosphate + H2O = 2 phosphate + H(+). In terms of biological role, catalyzes the hydrolysis of inorganic pyrophosphate (PPi) forming two phosphate ions. This chain is Inorganic pyrophosphatase, found in Pseudomonas aeruginosa (strain ATCC 15692 / DSM 22644 / CIP 104116 / JCM 14847 / LMG 12228 / 1C / PRS 101 / PAO1).